We begin with the raw amino-acid sequence, 310 residues long: Protein YIP5 (310 aa).

Positions methionine 1–leucine 84 are disordered. Residues aspartate 10–glycine 22 show a composition bias toward acidic residues. Residues aspartate 35–lysine 57 show a composition bias toward polar residues. Serine 60 carries the phosphoserine modification. 5 helical membrane-spanning segments follow: residues threonine 131–serine 151, leucine 181–valine 201, leucine 220–isoleucine 240, threonine 249–leucine 269, and serine 290–phenylalanine 310.

It belongs to the YIP1 family. Interacts with SNX3, TVP18, TVP23, YIP1 and YIP4. Interacts with SEC4; The C-terminal cysteines in the Rab GTPase SEC4 are essential for the interaction. Interacts with YPT1, YPT6, YPT7, YPT10, YPT11, YPT31, YPT32 and YPT52; These proteins are all Rab GTPases.

It localises to the membrane. Its function is as follows. Possible role in vesicle-mediated transport. May be involved in proper membrane localization of Rab GTPases. The sequence is that of Protein YIP5 (YIP5) from Saccharomyces cerevisiae (strain ATCC 204508 / S288c) (Baker's yeast).